The following is a 226-amino-acid chain: Late protein I226R (226 aa).

An N-terminal signal peptide occupies residues 1 to 16 (MKMETFLVCLFHNADG). Asparagine 142 and asparagine 164 each carry an N-linked (GlcNAc...) asparagine; by host glycan.

This sequence belongs to the asfivirus I226R family.

Its function is as follows. Plays a role in the inhibition of host NF-kappa-B and IRF3 signaling pathways. Mechanistically, promotes the degradation of host IKBKG through enhancing its ubiquitination leading to inhibition of both pathways. This African swine fever virus (isolate Warthog/Namibia/Wart80/1980) (ASFV) protein is Late protein I226R.